Here is a 115-residue protein sequence, read N- to C-terminus: Macrophage migration inhibitory factor (115 aa).

The Proton acceptor; via imino nitrogen role is filled by Pro-2. Substrate contacts are provided by Lys-33 and Ile-65. Residue Lys-78 is modified to N6-acetyllysine; alternate. N6-succinyllysine; alternate is present on Lys-78. A substrate-binding site is contributed by Asn-98.

The protein belongs to the MIF family. As to quaternary structure, homotrimer. Interacts with CD74 and CXCR2 extracellular domain and COPS5. Interacts with the USO1 and BNIPL.

The protein localises to the secreted. It localises to the cytoplasm. The catalysed reaction is 3-phenylpyruvate = enol-phenylpyruvate. It carries out the reaction L-dopachrome = 5,6-dihydroxyindole-2-carboxylate. Its function is as follows. Pro-inflammatory cytokine involved in the innate immune response to bacterial pathogens. The expression of MIF at sites of inflammation suggests a role as mediator in regulating the function of macrophages in host defense. Counteracts the anti-inflammatory activity of glucocorticoids. Has phenylpyruvate tautomerase and dopachrome tautomerase activity (in vitro), but the physiological substrate is not known. It is not clear whether the tautomerase activity has any physiological relevance, and whether it is important for cytokine activity. The protein is Macrophage migration inhibitory factor of Mus musculus (Mouse).